The sequence spans 914 residues: DNA mismatch repair protein MutS (914 aa).

Residues 1–25 (MDKKNDHKNNLIPQPASSFASSQER) form a disordered region. Polar residues predominate over residues 11-25 (LIPQPASSFASSQER). Residue 662–669 (GPNMGGKS) participates in ATP binding.

Belongs to the DNA mismatch repair MutS family.

This protein is involved in the repair of mismatches in DNA. It is possible that it carries out the mismatch recognition step. This protein has a weak ATPase activity. In Bartonella tribocorum (strain CIP 105476 / IBS 506), this protein is DNA mismatch repair protein MutS.